A 333-amino-acid chain; its full sequence is MFNLKNRNFLTLMDFTPKEINYFLDLARDLKRAKYTGTEVQRMKGKNIALIFEKASTRTRCAFEVGAKDQGAHVTYLGPTGSHIGKKESAADTARVLGRMYDGIEYRGFGQEIVETLAEYAGVPVWNGLTDEDHPTQILADFLTIREHFNKPLSEIKFAYVGDGANNMANALMIGAVKMGMDFRIVSPKEIPTDATLVAKCKEIAAETGAKVTITDNIEEGVKGCDVLYTDVWVSMGEPDSVWESKIKLLTPYRVDMNMIKMTGNPDAKFMHCLPAFHDEETAVGKEIKEKYGLSEMEVSHELFESKYSIVFDEAENRMHTIKAVMVATLGDQ.

Carbamoyl phosphate is bound by residues 56–59 (STRT), R107, and 134–137 (HPTQ). Residues N167, D231, and 235–236 (SM) contribute to the L-ornithine site. Residues 273-274 (CL) and R318 contribute to the carbamoyl phosphate site.

Belongs to the aspartate/ornithine carbamoyltransferase superfamily. OTCase family.

The protein resides in the cytoplasm. It catalyses the reaction carbamoyl phosphate + L-ornithine = L-citrulline + phosphate + H(+). It participates in amino-acid degradation; L-arginine degradation via ADI pathway; carbamoyl phosphate from L-arginine: step 2/2. Its function is as follows. Reversibly catalyzes the transfer of the carbamoyl group from carbamoyl phosphate (CP) to the N(epsilon) atom of ornithine (ORN) to produce L-citrulline. The polypeptide is Ornithine carbamoyltransferase (Clostridium botulinum (strain Langeland / NCTC 10281 / Type F)).